The sequence spans 287 residues: ATP synthase gamma chain (287 aa).

It belongs to the ATPase gamma chain family. As to quaternary structure, F-type ATPases have 2 components, CF(1) - the catalytic core - and CF(0) - the membrane proton channel. CF(1) has five subunits: alpha(3), beta(3), gamma(1), delta(1), epsilon(1). CF(0) has three main subunits: a, b and c.

The protein resides in the cell inner membrane. Functionally, produces ATP from ADP in the presence of a proton gradient across the membrane. The gamma chain is believed to be important in regulating ATPase activity and the flow of protons through the CF(0) complex. In Alkalilimnicola ehrlichii (strain ATCC BAA-1101 / DSM 17681 / MLHE-1), this protein is ATP synthase gamma chain.